Reading from the N-terminus, the 784-residue chain is Endonuclease MutS2 (784 aa).

335–342 (GPNTGGKT) is a binding site for ATP. The Smr domain maps to 709–784 (LDLRGERYED…GTGVTIVELK (76 aa)).

This sequence belongs to the DNA mismatch repair MutS family. MutS2 subfamily. As to quaternary structure, homodimer. Binds to stalled ribosomes, contacting rRNA.

Its function is as follows. Endonuclease that is involved in the suppression of homologous recombination and thus may have a key role in the control of bacterial genetic diversity. Functionally, acts as a ribosome collision sensor, splitting the ribosome into its 2 subunits. Detects stalled/collided 70S ribosomes which it binds and splits by an ATP-hydrolysis driven conformational change. Acts upstream of the ribosome quality control system (RQC), a ribosome-associated complex that mediates the extraction of incompletely synthesized nascent chains from stalled ribosomes and their subsequent degradation. Probably generates substrates for RQC. This Geobacillus sp. (strain WCH70) protein is Endonuclease MutS2.